The following is a 452-amino-acid chain: 2-succinylbenzoate--CoA ligase (452 aa).

This sequence belongs to the ATP-dependent AMP-binding enzyme family. MenE subfamily.

It carries out the reaction 2-succinylbenzoate + ATP + CoA = 2-succinylbenzoyl-CoA + AMP + diphosphate. The protein operates within quinol/quinone metabolism; 1,4-dihydroxy-2-naphthoate biosynthesis; 1,4-dihydroxy-2-naphthoate from chorismate: step 5/7. It functions in the pathway quinol/quinone metabolism; menaquinone biosynthesis. Functionally, converts 2-succinylbenzoate (OSB) to 2-succinylbenzoyl-CoA (OSB-CoA). This is 2-succinylbenzoate--CoA ligase from Haemophilus influenzae (strain ATCC 51907 / DSM 11121 / KW20 / Rd).